Reading from the N-terminus, the 218-residue chain is 3,4-dihydroxy-2-butanone 4-phosphate synthase (218 aa).

D-ribulose 5-phosphate is bound by residues 37-38, Asp-42, 150-154, and Glu-174; these read RE and RGGHT. Glu-38 is a binding site for Mg(2+). His-153 is a binding site for Mg(2+).

The protein belongs to the DHBP synthase family. In terms of assembly, homodimer. It depends on Mg(2+) as a cofactor. Requires Mn(2+) as cofactor.

It catalyses the reaction D-ribulose 5-phosphate = (2S)-2-hydroxy-3-oxobutyl phosphate + formate + H(+). It functions in the pathway cofactor biosynthesis; riboflavin biosynthesis; 2-hydroxy-3-oxobutyl phosphate from D-ribulose 5-phosphate: step 1/1. Its function is as follows. Catalyzes the conversion of D-ribulose 5-phosphate to formate and 3,4-dihydroxy-2-butanone 4-phosphate. The chain is 3,4-dihydroxy-2-butanone 4-phosphate synthase from Erwinia tasmaniensis (strain DSM 17950 / CFBP 7177 / CIP 109463 / NCPPB 4357 / Et1/99).